The sequence spans 150 residues: Large ribosomal subunit protein uL13 (150 aa).

It belongs to the universal ribosomal protein uL13 family. Part of the 50S ribosomal subunit.

Functionally, this protein is one of the early assembly proteins of the 50S ribosomal subunit, although it is not seen to bind rRNA by itself. It is important during the early stages of 50S assembly. This chain is Large ribosomal subunit protein uL13, found in Chlamydia muridarum (strain MoPn / Nigg).